A 563-amino-acid polypeptide reads, in one-letter code: Pentatricopeptide repeat-containing protein At4g39620, chloroplastic (563 aa).

A chloroplast-targeting transit peptide spans 1 to 47 (MDYLLTSPSSLRFSDFISSIPKETDHKWLRFSVNLGDARRSTRTRIT). PPR repeat units follow at residues 132-166 (DNGV…GCRP), 167-197 (DASV…YLDK), 207-241 (NVVT…PVSP), 242-276 (DVYT…ECKP), 277-311 (DIIT…KEKP), 312-346 (TLPT…NYIP), 347-381 (SFIT…DRVL), 382-416 (KAST…RVHP), and 417-451 (DAST…GIVP). Disordered stretches follow at residues 468–501 (PGSG…FQDK) and 520–551 (NLSG…NNMM). Positions 520–537 (NLSGHDKGSRDESRKPSQ) are enriched in basic and acidic residues.

Belongs to the PPR family. P subfamily.

It is found in the plastid. Its subcellular location is the chloroplast. Functionally, essential for embryo development. The protein is Pentatricopeptide repeat-containing protein At4g39620, chloroplastic of Arabidopsis thaliana (Mouse-ear cress).